The following is a 153-amino-acid chain: Large ribosomal subunit protein uL13 (153 aa).

Residues 134–153 (EAQQPQALDVGSLNRKNVSA) form a disordered region.

The protein belongs to the universal ribosomal protein uL13 family. As to quaternary structure, part of the 50S ribosomal subunit.

In terms of biological role, this protein is one of the early assembly proteins of the 50S ribosomal subunit, although it is not seen to bind rRNA by itself. It is important during the early stages of 50S assembly. This chain is Large ribosomal subunit protein uL13, found in Methylorubrum extorquens (strain CM4 / NCIMB 13688) (Methylobacterium extorquens).